Here is a 20-residue protein sequence, read N- to C-terminus: Phylloseptin-O1 (20 aa).

Glycine 20 carries the glycine amide modification.

In terms of tissue distribution, expressed by the skin glands.

It localises to the secreted. Functionally, has antiprotozoal activity against T.cruzi. The chain is Phylloseptin-O1 (psn4) from Pithecopus oreades (Orange-legged leaf frog).